A 382-amino-acid polypeptide reads, in one-letter code: Mannitol-1-phosphate 5-dehydrogenase (382 aa).

4-15 is an NAD(+) binding site; sequence AVHFGAGNIGRG.

This sequence belongs to the mannitol dehydrogenase family.

It catalyses the reaction D-mannitol 1-phosphate + NAD(+) = beta-D-fructose 6-phosphate + NADH + H(+). The polypeptide is Mannitol-1-phosphate 5-dehydrogenase (Vibrio vulnificus (strain CMCP6)).